The chain runs to 192 residues: Elongation factor P (192 aa).

Lys-38 carries the post-translational modification N6-(3,6-diaminohexanoyl)-5-hydroxylysine.

The protein belongs to the elongation factor P family. In terms of processing, may be beta-lysylated on the epsilon-amino group of Lys-38 by the combined action of EpmA and EpmB, and then hydroxylated on the C5 position of the same residue by EpmC (if this protein is present). Lysylation is critical for the stimulatory effect of EF-P on peptide-bond formation. The lysylation moiety may extend toward the peptidyltransferase center and stabilize the terminal 3-CCA end of the tRNA. Hydroxylation of the C5 position on Lys-38 may allow additional potential stabilizing hydrogen-bond interactions with the P-tRNA.

The protein resides in the cytoplasm. Its pathway is protein biosynthesis; polypeptide chain elongation. Involved in peptide bond synthesis. Alleviates ribosome stalling that occurs when 3 or more consecutive Pro residues or the sequence PPG is present in a protein, possibly by augmenting the peptidyl transferase activity of the ribosome. Modification of Lys-38 is required for alleviation. This chain is Elongation factor P, found in Mannheimia succiniciproducens (strain KCTC 0769BP / MBEL55E).